A 117-amino-acid polypeptide reads, in one-letter code: G antigen 13 (117 aa).

The segment at 1-117 is disordered; sequence MSWRGRSTYY…PEEGEKQSQC (117 aa). Acidic residues-rich tracts occupy residues 32–45 and 87–96; these read FSDE…EEGE and ECEDGPDGQE. Positions 103–117 are enriched in basic and acidic residues; the sequence is EEVKTPEEGEKQSQC.

Belongs to the GAGE family.

This chain is G antigen 13, found in Homo sapiens (Human).